A 390-amino-acid polypeptide reads, in one-letter code: 1-acyl-sn-glycerol-3-phosphate acyltransferase 2 (390 aa).

Residues 2–22 (AMAAAVIVPLGILFFISGLVV) traverse the membrane as a helical segment. The HXXXXD motif motif lies at 91–96 (HRSDID). The next 2 membrane-spanning stretches (helical) occupy residues 305 to 325 (LAVVVSWACLLTLGAMKFLHW) and 333 to 353 (KGIALSAFGLGIITLCMQILI). The tract at residues 358–390 (SERSTPAKVAPAKPKDNHQSGPSSQTEVEEKQK) is disordered.

Belongs to the 1-acyl-sn-glycerol-3-phosphate acyltransferase family.

It localises to the endoplasmic reticulum membrane. It catalyses the reaction a 1-acyl-sn-glycero-3-phosphate + an acyl-CoA = a 1,2-diacyl-sn-glycero-3-phosphate + CoA. It functions in the pathway phospholipid metabolism; CDP-diacylglycerol biosynthesis; CDP-diacylglycerol from sn-glycerol 3-phosphate: step 2/3. Its function is as follows. Converts lysophosphatidic acid (LPA) into phosphatidic acid by incorporating acyl moiety at the 2 position. The sequence is that of 1-acyl-sn-glycerol-3-phosphate acyltransferase 2 (LPAT2) from Brassica napus (Rape).